A 261-amino-acid chain; its full sequence is tRNA pseudouridine synthase A (261 aa).

D51 acts as the Nucleophile in catalysis. Residue Y109 participates in substrate binding.

It belongs to the tRNA pseudouridine synthase TruA family. As to quaternary structure, homodimer.

The catalysed reaction is uridine(38/39/40) in tRNA = pseudouridine(38/39/40) in tRNA. Functionally, formation of pseudouridine at positions 38, 39 and 40 in the anticodon stem and loop of transfer RNAs. In Shewanella sp. (strain MR-4), this protein is tRNA pseudouridine synthase A.